Here is a 709-residue protein sequence, read N- to C-terminus: ATP-binding cassette sub-family F member 3 (709 aa).

Ala2 is modified (N-acetylalanine). A Phosphoserine modification is found at Ser83. Basic and acidic residues predominate over residues 129-143; that stretch reads RLKAKQEKRSEKDTL. Residues 129 to 171 form a disordered region; that stretch reads RLKAKQEKRSEKDTLKTSNPLVLEEASASQAGSRKESRLESSG. 3 positions are modified to phosphoserine: Ser155, Ser157, and Ser161. Residues 161–171 are compositionally biased toward basic and acidic residues; sequence SRKESRLESSG. ABC transporter domains lie at 178–424 and 492–707; these read VRIE…LNQQ and LQLD…RREG. 210–217 is an ATP binding site; it reads GRNGLGKT. Ser283 bears the Phosphoserine mark. 525-532 provides a ligand contact to ATP; the sequence is GENGAGKS.

The protein belongs to the ABC transporter superfamily. ABCF family. EF3 subfamily.

In terms of biological role, displays an antiviral effect against flaviviruses such as west Nile virus (WNV) in the presence of OAS1B. In Homo sapiens (Human), this protein is ATP-binding cassette sub-family F member 3 (ABCF3).